The following is a 209-amino-acid chain: Ribosomal RNA large subunit methyltransferase E (209 aa).

S-adenosyl-L-methionine contacts are provided by Gly63, Trp65, Asp83, Asp99, and Asp124. The Proton acceptor role is filled by Lys164.

It belongs to the class I-like SAM-binding methyltransferase superfamily. RNA methyltransferase RlmE family.

The protein resides in the cytoplasm. The enzyme catalyses uridine(2552) in 23S rRNA + S-adenosyl-L-methionine = 2'-O-methyluridine(2552) in 23S rRNA + S-adenosyl-L-homocysteine + H(+). In terms of biological role, specifically methylates the uridine in position 2552 of 23S rRNA at the 2'-O position of the ribose in the fully assembled 50S ribosomal subunit. The protein is Ribosomal RNA large subunit methyltransferase E of Aeromonas hydrophila subsp. hydrophila (strain ATCC 7966 / DSM 30187 / BCRC 13018 / CCUG 14551 / JCM 1027 / KCTC 2358 / NCIMB 9240 / NCTC 8049).